The following is a 273-amino-acid chain: Dermonecrotic toxin LruSicTox-alphaIC1b (273 aa).

Histidine 5 is an active-site residue. The Mg(2+) site is built by glutamate 25 and aspartate 27. Histidine 41 functions as the Nucleophile in the catalytic mechanism. 2 disulfide bridges follow: cysteine 45–cysteine 51 and cysteine 47–cysteine 190. Aspartate 85 provides a ligand contact to Mg(2+).

This sequence belongs to the arthropod phospholipase D family. Class II subfamily. Requires Mg(2+) as cofactor. In terms of tissue distribution, expressed by the venom gland.

Its subcellular location is the secreted. The enzyme catalyses an N-(acyl)-sphingosylphosphocholine = an N-(acyl)-sphingosyl-1,3-cyclic phosphate + choline. The catalysed reaction is an N-(acyl)-sphingosylphosphoethanolamine = an N-(acyl)-sphingosyl-1,3-cyclic phosphate + ethanolamine. It catalyses the reaction a 1-acyl-sn-glycero-3-phosphocholine = a 1-acyl-sn-glycero-2,3-cyclic phosphate + choline. It carries out the reaction a 1-acyl-sn-glycero-3-phosphoethanolamine = a 1-acyl-sn-glycero-2,3-cyclic phosphate + ethanolamine. Functionally, dermonecrotic toxins cleave the phosphodiester linkage between the phosphate and headgroup of certain phospholipids (sphingolipid and lysolipid substrates), forming an alcohol (often choline) and a cyclic phosphate. This toxin acts on sphingomyelin (SM). It may also act on ceramide phosphoethanolamine (CPE), lysophosphatidylcholine (LPC) and lysophosphatidylethanolamine (LPE), but not on lysophosphatidylserine (LPS), and lysophosphatidylglycerol (LPG). It acts by transphosphatidylation, releasing exclusively cyclic phosphate products as second products. Induces dermonecrosis, hemolysis, increased vascular permeability, edema, inflammatory response, and platelet aggregation. This chain is Dermonecrotic toxin LruSicTox-alphaIC1b, found in Loxosceles rufescens (Mediterranean recluse spider).